Consider the following 446-residue polypeptide: DNA repair protein RadA (446 aa).

The C4-type zinc finger occupies 10-27 (CSNCGNTSPKWSGQCFDC). 91–98 (GDPGIGKS) contacts ATP. The RadA KNRFG motif motif lies at 250–254 (KNRFG). The lon-protease-like stretch occupies residues 349–446 (EVYLSIAGGL…HLKDLKEIIR (98 aa)).

It belongs to the RecA family. RadA subfamily.

Functionally, DNA-dependent ATPase involved in processing of recombination intermediates, plays a role in repairing DNA breaks. Stimulates the branch migration of RecA-mediated strand transfer reactions, allowing the 3' invading strand to extend heteroduplex DNA faster. Binds ssDNA in the presence of ADP but not other nucleotides, has ATPase activity that is stimulated by ssDNA and various branched DNA structures, but inhibited by SSB. Does not have RecA's homology-searching function. This is DNA repair protein RadA from Rickettsia felis (strain ATCC VR-1525 / URRWXCal2) (Rickettsia azadi).